Here is a 144-residue protein sequence, read N- to C-terminus: MSSHQQKQPCTVPPQLHQQQVKQPCQPPPQEPCAPKTKDPCHPVPEPCNPKGPEPCHPKAPEPCHPKAPEPCNPKVPEPCQPKVPEPCQPKVPEPCNPKVPEPCQPKAPEPCHPKAPEPCHPVVPEPCPSTVTPSPYQQKTKQK.

The tract at residues 1 to 41 (MSSHQQKQPCTVPPQLHQQQVKQPCQPPPQEPCAPKTKDPC) is disordered. Low complexity predominate over residues 13-24 (PPQLHQQQVKQP). 13 consecutive repeat copies span residues 27–34 (PPPQEPCA), 35–42 (PKTKDPCH), 43–49 (PVPEPCN), 50–57 (PKGPEPCH), 58–65 (PKAPEPCH), 66–73 (PKAPEPCN), 74–81 (PKVPEPCQ), 82–89 (PKVPEPCQ), 90–97 (PKVPEPCN), 98–105 (PKVPEPCQ), 106–113 (PKAPEPCH), 114–121 (PKAPEPCH), and 122–129 (PVVPEPCP). Positions 27 to 129 (PPPQEPCAPK…CHPVVPEPCP (103 aa)) are 13 X 8 AA approximate tandem repeats.

The protein belongs to the cornifin (SPRR) family. In terms of tissue distribution, expressed in fetal periderm, hair follicles and in the thickened epidermis of the lip and footpad. Also present in the epithelia of various tissues such as the penis, vagina, forestomach, tongue and esophagus.

Its subcellular location is the cytoplasm. In terms of biological role, cross-linked envelope protein of keratinocytes. It is a keratinocyte protein that first appears in the cell cytosol, but ultimately becomes cross-linked to membrane proteins by transglutaminase. All that results in the formation of an insoluble envelope beneath the plasma membrane. May participate widely in the construction of cell envelopes in cornifying epithelia characterized by either increased thickness or a requirement for extreme flexibility. The protein is Cornifin-A (Sprr1a) of Mus musculus (Mouse).